The chain runs to 526 residues: CTP synthase (526 aa).

An amidoligase domain region spans residues 1–270 (MKYIFVTGGV…ADVLSTHLGL (270 aa)). Residue S12 coordinates CTP. A UTP-binding site is contributed by S12. ATP-binding positions include 13–18 (GLGKGI) and D70. The Mg(2+) site is built by D70 and E145. Residues 152–154 (DIE), 191–196 (KTKPTQ), and K227 contribute to the CTP site. UTP is bound by residues 191–196 (KTKPTQ) and K227. The region spanning 293 to 525 (VAIVSKYGIE…VEACRANKRT (233 aa)) is the Glutamine amidotransferase type-1 domain. L-glutamine is bound at residue G349. C376 functions as the Nucleophile; for glutamine hydrolysis in the catalytic mechanism. L-glutamine contacts are provided by residues 377–380 (LGFQ), E400, and R455. Catalysis depends on residues H498 and E500.

The protein belongs to the CTP synthase family. In terms of assembly, homotetramer.

The enzyme catalyses UTP + L-glutamine + ATP + H2O = CTP + L-glutamate + ADP + phosphate + 2 H(+). It catalyses the reaction L-glutamine + H2O = L-glutamate + NH4(+). It carries out the reaction UTP + NH4(+) + ATP = CTP + ADP + phosphate + 2 H(+). The protein operates within pyrimidine metabolism; CTP biosynthesis via de novo pathway; CTP from UDP: step 2/2. Its activity is regulated as follows. Allosterically activated by GTP, when glutamine is the substrate; GTP has no effect on the reaction when ammonia is the substrate. The allosteric effector GTP functions by stabilizing the protein conformation that binds the tetrahedral intermediate(s) formed during glutamine hydrolysis. Inhibited by the product CTP, via allosteric rather than competitive inhibition. Functionally, catalyzes the ATP-dependent amination of UTP to CTP with either L-glutamine or ammonia as the source of nitrogen. Regulates intracellular CTP levels through interactions with the four ribonucleotide triphosphates. This chain is CTP synthase, found in Methanoregula boonei (strain DSM 21154 / JCM 14090 / 6A8).